A 444-amino-acid chain; its full sequence is Methylenetetrahydrofolate--tRNA-(uracil-5-)-methyltransferase TrmFO (444 aa).

Gly10–Gly15 provides a ligand contact to FAD.

The protein belongs to the MnmG family. TrmFO subfamily. The cofactor is FAD.

It is found in the cytoplasm. It carries out the reaction uridine(54) in tRNA + (6R)-5,10-methylene-5,6,7,8-tetrahydrofolate + NADH + H(+) = 5-methyluridine(54) in tRNA + (6S)-5,6,7,8-tetrahydrofolate + NAD(+). The catalysed reaction is uridine(54) in tRNA + (6R)-5,10-methylene-5,6,7,8-tetrahydrofolate + NADPH + H(+) = 5-methyluridine(54) in tRNA + (6S)-5,6,7,8-tetrahydrofolate + NADP(+). In terms of biological role, catalyzes the folate-dependent formation of 5-methyl-uridine at position 54 (M-5-U54) in all tRNAs. This Streptococcus equi subsp. zooepidemicus (strain H70) protein is Methylenetetrahydrofolate--tRNA-(uracil-5-)-methyltransferase TrmFO.